A 1043-amino-acid chain; its full sequence is Isoleucine--tRNA ligase (1043 aa).

The short motif at Pro48–His58 is the 'HIGH' region element. Residues Lys591–Arg595 carry the 'KMSKS' region motif. Lys594 is an ATP binding site.

It belongs to the class-I aminoacyl-tRNA synthetase family. IleS type 2 subfamily. Monomer. Requires Zn(2+) as cofactor.

The protein localises to the cytoplasm. The catalysed reaction is tRNA(Ile) + L-isoleucine + ATP = L-isoleucyl-tRNA(Ile) + AMP + diphosphate. In terms of biological role, catalyzes the attachment of isoleucine to tRNA(Ile). As IleRS can inadvertently accommodate and process structurally similar amino acids such as valine, to avoid such errors it has two additional distinct tRNA(Ile)-dependent editing activities. One activity is designated as 'pretransfer' editing and involves the hydrolysis of activated Val-AMP. The other activity is designated 'posttransfer' editing and involves deacylation of mischarged Val-tRNA(Ile). The chain is Isoleucine--tRNA ligase from Chlamydia pneumoniae (Chlamydophila pneumoniae).